The following is a 306-amino-acid chain: UPF0282 protein Pars_1056 (306 aa).

This sequence belongs to the UPF0282 family.

This chain is UPF0282 protein Pars_1056, found in Pyrobaculum arsenaticum (strain DSM 13514 / JCM 11321 / PZ6).